We begin with the raw amino-acid sequence, 95 residues long: Ferredoxin-like protein FixX (95 aa).

Belongs to the bacterial-type ferredoxin family. FixX subfamily.

Functionally, could be part of an electron transfer system required for anaerobic carnitine reduction. Could be a 3Fe-4S cluster-containing protein. This chain is Ferredoxin-like protein FixX (fixX), found in Salmonella typhimurium (strain LT2 / SGSC1412 / ATCC 700720).